Reading from the N-terminus, the 134-residue chain is Terepressin/terephysin (134 aa).

Positions 1-33 are cleaved as a signal peptide; the sequence is MKCSVLQMSRLSWTACVLLLPLLLLTLQGGVQG. Cys34 and Cys39 are disulfide-bonded. Positions 44–50 are excised as a propeptide; the sequence is KRAVDSV. Intrachain disulfides connect Cys56-Cys100, Cys59-Cys73, Cys67-Cys90, Cys74-Cys80, Cys107-Cys121, Cys115-Cys133, and Cys122-Cys127.

Belongs to the vasopressin/oxytocin family. In terms of processing, contains 7 disulfide bonds. In terms of tissue distribution, expressed by the venom duct.

The protein localises to the secreted. In Terebra anilis (Auger snail), this protein is Terepressin/terephysin.